The sequence spans 424 residues: Lipoamide acyltransferase component of branched-chain alpha-keto acid dehydrogenase complex (424 aa).

Residues 3-78 (IEQMTMPQLG…QVGEMICKIE (76 aa)) enclose the Lipoyl-binding domain. An N6-lipoyllysine modification is found at K44. Positions 82–115 (ANPAEQKQEQPAASEAAENPVAKSAGAADQPNKK) are disordered. The 38-residue stretch at 116–153 (RYSPAVLRLAGEHGIDLDQVTGTGAGGRITRKDIQRLI) folds into the Peripheral subunit-binding (PSBD) domain. Positions 154–193 (ETGGVQEQNPEELKTAAPAPKSASKPEPKEETSYPASAAG) are disordered. Residues H395 and D399 contribute to the active site.

Belongs to the 2-oxoacid dehydrogenase family. Forms a 24-polypeptide structural core with octahedral symmetry. Requires (R)-lipoate as cofactor.

It carries out the reaction N(6)-[(R)-dihydrolipoyl]-L-lysyl-[protein] + 2-methylpropanoyl-CoA = N(6)-[(R)-S(8)-2-methylpropanoyldihydrolipoyl]-L-lysyl-[protein] + CoA. The branched-chain alpha-keto dehydrogenase complex catalyzes the overall conversion of alpha-keto acids to acyl-CoA and CO(2). It contains multiple copies of three enzymatic components: branched-chain alpha-keto acid decarboxylase (E1), lipoamide acyltransferase (E2) and lipoamide dehydrogenase (E3). The chain is Lipoamide acyltransferase component of branched-chain alpha-keto acid dehydrogenase complex (bfmBB) from Bacillus subtilis (strain 168).